The sequence spans 404 residues: 1-deoxy-D-xylulose 5-phosphate reductoisomerase (404 aa).

8 residues coordinate NADPH: threonine 10, glycine 11, serine 12, isoleucine 13, glycine 36, arginine 37, asparagine 38, and asparagine 124. Lysine 125 serves as a coordination point for 1-deoxy-D-xylulose 5-phosphate. Residue glutamate 126 participates in NADPH binding. Aspartate 150 is a binding site for Mn(2+). Serine 151, glutamate 152, serine 186, and histidine 209 together coordinate 1-deoxy-D-xylulose 5-phosphate. Mn(2+) is bound at residue glutamate 152. Glycine 215 serves as a coordination point for NADPH. Positions 222, 227, 228, and 231 each coordinate 1-deoxy-D-xylulose 5-phosphate. Glutamate 231 is a Mn(2+) binding site.

Belongs to the DXR family. As to quaternary structure, homodimer. The cofactor is Mg(2+). Mn(2+) serves as cofactor.

The enzyme catalyses 2-C-methyl-D-erythritol 4-phosphate + NADP(+) = 1-deoxy-D-xylulose 5-phosphate + NADPH + H(+). Its pathway is isoprenoid biosynthesis; isopentenyl diphosphate biosynthesis via DXP pathway; isopentenyl diphosphate from 1-deoxy-D-xylulose 5-phosphate: step 1/6. Catalyzes the NADPH-dependent rearrangement and reduction of 1-deoxy-D-xylulose-5-phosphate (DXP) to 2-C-methyl-D-erythritol 4-phosphate (MEP). This chain is 1-deoxy-D-xylulose 5-phosphate reductoisomerase, found in Erwinia tasmaniensis (strain DSM 17950 / CFBP 7177 / CIP 109463 / NCPPB 4357 / Et1/99).